A 179-amino-acid chain; its full sequence is UPF0302 protein YpiB (179 aa).

The protein belongs to the UPF0302 family.

The chain is UPF0302 protein YpiB (ypiB) from Bacillus subtilis (strain 168).